We begin with the raw amino-acid sequence, 465 residues long: uncharacterized protein (465 aa).

Over residues 1 to 15 (MEKNYIFENSIYKDE) the composition is skewed to basic and acidic residues. Disordered stretches follow at residues 1–31 (MEKN…NNSS) and 288–320 (QLEK…EQLP).

This is an uncharacterized protein from Dictyostelium discoideum (Social amoeba).